Reading from the N-terminus, the 91-residue chain is Defensin-like protein 82 (91 aa).

The N-terminal stretch at methionine 1–glycine 27 is a signal peptide. Disulfide bonds link cysteine 34–cysteine 72, cysteine 41–cysteine 62, cysteine 47–cysteine 70, and cysteine 51–cysteine 71.

It belongs to the DEFL family.

It localises to the secreted. This Arabidopsis thaliana (Mouse-ear cress) protein is Defensin-like protein 82.